Here is a 372-residue protein sequence, read N- to C-terminus: Stress-activated protein kinase JNK (372 aa).

A Protein kinase domain is found at 24–320 (YINLRPIGSG…VDEALKHEYI (297 aa)). ATP is bound by residues 31–36 (GSGAQG) and lysine 53. Aspartate 149 (proton acceptor) is an active-site residue. Threonine 181 bears the Phosphothreonine mark. Positions 181–183 (TPY) match the TXY motif. Tyrosine 183 is modified (phosphotyrosine).

Belongs to the protein kinase superfamily. CMGC Ser/Thr protein kinase family. MAP kinase subfamily. In terms of assembly, interacts with MKP-4 (via tyrosine-protein phosphatase domain); the interaction dephosphorylates bsk. Mg(2+) is required as a cofactor. In terms of processing, dually phosphorylated on Thr-181 and Tyr-183, which activates the enzyme. As to expression, during gastrulation, expression is seen in cells undergoing morphogenetic movements. By stage 9 of embryonic development, expression is ubiquitous. At stages 12-14, expression occurs in epidermis and central nervous system. At stage 15, expression is restricted to ventral nerve cord, brain and some peripheral neurons. In larvae, expression is seen in all imaginal disks, with highest levels in wing and eye disks, and in the CNS. Adults express the protein in fat body and hemocytes.

It localises to the nucleus. The protein localises to the cytoplasm. It carries out the reaction L-seryl-[protein] + ATP = O-phospho-L-seryl-[protein] + ADP + H(+). It catalyses the reaction L-threonyl-[protein] + ATP = O-phospho-L-threonyl-[protein] + ADP + H(+). With respect to regulation, activated by threonine and tyrosine phosphorylation by the dual specificity kinase, hep. Inhibited by dual specificity phosphatase, puckered. Its function is as follows. Mitogen-activated protein kinase and key component of the c-Jun N-terminal kinase (JNK) pathway which phosphorylate and activate transcription factors involved in a wide range of biological processes including response to various stresses, cellular proliferation, differentiation and migration, and regulation of cell shape. Responds to activation by environmental stress by phosphorylating a number of transcription factors, primarily components of AP-1 such as Jra and also the transcriptional repressor aop, and thus regulates transcriptional activity. Component of the immune response activated by bacterial infection, and is involved in wound healing and in dorsal closure, a morphogenetic movement during embryogenesis. Functions in the systematic response to wounding acting downstream of the Hayan-phenoloxidase PPO1 cascade. During epidermal wound healing involved in cellular polarization by inducing the translocation of sktl and mys/integrin beta to the trailing edge. Exhibits cytoprotective activity in neuronal cells in response to wounding to the integument. Controls the expression of a phosphatase, puckered, at the edges of wounded epidermal tissue and in the dorsal epithelium during dorsal closure. Regulates the activity of SREBP in neurons and thereby the accumulation of lipids in glia. Plays a role in positively regulating the expression of DIP2 independently of AP-1, thereby ensuring proper axon guidance in mushroom bodies. In enterocytes and differentiating progenitors of the gut that are experiencing inorganic phosphate (Pi) deficiency, activated by Cka to induce nearby progenitor cells to proliferate and form new absorptive cells, probably helping the organism to cope with the nutrient deficiency by maximizing absorption of dietary Pi. The protein is Stress-activated protein kinase JNK of Drosophila melanogaster (Fruit fly).